The following is a 1087-amino-acid chain: Formin-H (1087 aa).

The span at 1-23 (MSFDLESNSSGGSTIGRNSSIRL) shows a compositional bias: polar residues. A disordered region spans residues 1-25 (MSFDLESNSSGGSTIGRNSSIRLSS). A GBD/FH3 domain is found at 34-394 (VSLNEIIDLD…QLEDELKIHP (361 aa)). 2 stretches are compositionally biased toward low complexity: residues 416–436 (FGFGSKSKSPSSSPALSSMAK) and 549–558 (SPGSTLSPSP). 3 disordered regions span residues 416–445 (FGFGSKSKSPSSSPALSSMAKTELKKDNEE), 549–625 (SPGS…PAKP), and 1048–1087 (VDSLRKNLKSTSTTTPNTPPTIKIELPSQSILKPSGQLKK). Residues 433–461 (SMAKTELKKDNEEKQKTIEHLLKQLNKFS) are a coiled coil. The span at 569–588 (FGITSSSIHTSTDKLTNSTE) shows a compositional bias: polar residues. Residues 589–615 (PILGSPPPPPPPPMSGGGGPPPPPPPP) form the FH1 domain. The span at 592–616 (GSPPPPPPPPMSGGGGPPPPPPPPG) shows a compositional bias: pro residues. The FH2 domain occupies 623-1016 (AKPIIKPSVK…ENSKMEDPEK (394 aa)). The 39-residue stretch at 1013-1051 (DPEKGGLQDLSSQIRSGQLFKDRRVGDSVIAQMQNVDSL) folds into the DAD domain.

It belongs to the formin homology family. Diaphanous subfamily. Interacts with vasP, proB/profilin-2 and rac1A. Interacts (via GBD/FH3 domain) with activated Rho-GTPases.

The protein resides in the cytoplasm. It is found in the cell cortex. Its subcellular location is the cytoskeleton. In terms of biological role, formins play an important role in the nucleation of actin and the formation of linear actin filaments. Important for cell migration and formation, elongation and maintenance of filopodia. Specifically controls filopodial dynamics by regulating actin turnover at the barbed ends of actin filaments. The sequence is that of Formin-H (forH) from Dictyostelium discoideum (Social amoeba).